A 137-amino-acid chain; its full sequence is MRILGLDVGTKTVGVAISDEMGWTAQGLETIKINEERGHFGFDRISELVKQYNVDKIVVGLPKNMNGTIGPRGEACQQFAENLRELLQLDVVMWDERLSTMAAERLLISADVSRKKRKQVIDKMAAVVILQGFLDRK.

The protein belongs to the YqgF nuclease family.

The protein resides in the cytoplasm. In terms of biological role, could be a nuclease involved in processing of the 5'-end of pre-16S rRNA. In Bacillus cereus (strain B4264), this protein is Putative pre-16S rRNA nuclease.